Here is a 142-residue protein sequence, read N- to C-terminus: MKTPRRRMRLAVFKALFQHEFRRDEDLEQILEEILDETYDKKAKEDARRYIRGIKENLSMIDDLISRYLEKWSLNRLSVVDRNVLRLATYELLFEKDIPIEVTIDEAIEIAKRYGTENSGKFVNGILDRIAKEHAPKEKFEL.

This sequence belongs to the NusB family. As to quaternary structure, monomer or homodimer; in equilibrium, with a preference for the monomer. Dimerization may be employed to package NusB in an inactive form until recruitment into antitermination complexes.

In terms of biological role, involved in transcription antitermination. Required for transcription of ribosomal RNA (rRNA) genes. Binds specifically to the boxA antiterminator sequence of the ribosomal RNA (rrn) operons. The sequence is that of Transcription antitermination protein NusB from Thermotoga maritima (strain ATCC 43589 / DSM 3109 / JCM 10099 / NBRC 100826 / MSB8).